Reading from the N-terminus, the 397-residue chain is Succinate--CoA ligase [ADP-forming] subunit beta (397 aa).

Residues 9 to 253 (KEILASYGVR…IREENPIEVE (245 aa)) enclose the ATP-grasp domain. ATP-binding positions include Lys50, 57–59 (GRG), Val106, and Glu116. Mg(2+) contacts are provided by Asn208 and Asp222. Residues Asn273 and 330–332 (GIV) contribute to the substrate site.

The protein belongs to the succinate/malate CoA ligase beta subunit family. Heterotetramer of two alpha and two beta subunits. Mg(2+) is required as a cofactor.

The catalysed reaction is succinate + ATP + CoA = succinyl-CoA + ADP + phosphate. It catalyses the reaction GTP + succinate + CoA = succinyl-CoA + GDP + phosphate. Its pathway is carbohydrate metabolism; tricarboxylic acid cycle; succinate from succinyl-CoA (ligase route): step 1/1. Succinyl-CoA synthetase functions in the citric acid cycle (TCA), coupling the hydrolysis of succinyl-CoA to the synthesis of either ATP or GTP and thus represents the only step of substrate-level phosphorylation in the TCA. The beta subunit provides nucleotide specificity of the enzyme and binds the substrate succinate, while the binding sites for coenzyme A and phosphate are found in the alpha subunit. This Flavobacterium johnsoniae (strain ATCC 17061 / DSM 2064 / JCM 8514 / BCRC 14874 / CCUG 350202 / NBRC 14942 / NCIMB 11054 / UW101) (Cytophaga johnsonae) protein is Succinate--CoA ligase [ADP-forming] subunit beta.